The chain runs to 756 residues: U3 small nucleolar RNA-associated protein 14 homolog B (756 aa).

Positions 21-44 (DLPENYPLSTSEDEGDSDGEGKRQ) are disordered. Ser29, Ser31, and Ser37 each carry phosphoserine. Coiled-coil stretches lie at residues 215–244 (SLEE…RREK) and 316–345 (PEAR…SEEE). Composition is skewed to basic and acidic residues over residues 419 to 428 (KERSFQERVD) and 452 to 468 (LNKE…SSEE). 2 disordered regions span residues 419 to 468 (KERS…SSEE) and 497 to 539 (QQGE…KKKK). Residues 449–476 (LQKLNKESHQSDNQKVSSEENVLHIQRE) adopt a coiled-coil conformation. Ser554 is modified (phosphoserine).

Belongs to the UTP14 family. In terms of tissue distribution, expressed predominantly in germ cells of the testis; weakly expressed in brain.

The protein resides in the nucleus. It is found in the nucleolus. In terms of biological role, essential for spermatogenesis. May be required specifically for ribosome biogenesis and hence protein synthesis during male meiosis. This Mus musculus (Mouse) protein is U3 small nucleolar RNA-associated protein 14 homolog B (Utp14b).